A 200-amino-acid chain; its full sequence is Molybdenum cofactor guanylyltransferase (200 aa).

GTP contacts are provided by residues 10-12, Lys-23, Asn-51, Asp-69, and Asp-99; that span reads LAG. Asp-99 contacts Mg(2+).

The protein belongs to the MobA family. In terms of assembly, monomer. The cofactor is Mg(2+).

It is found in the cytoplasm. It catalyses the reaction Mo-molybdopterin + GTP + H(+) = Mo-molybdopterin guanine dinucleotide + diphosphate. Functionally, transfers a GMP moiety from GTP to Mo-molybdopterin (Mo-MPT) cofactor (Moco or molybdenum cofactor) to form Mo-molybdopterin guanine dinucleotide (Mo-MGD) cofactor. This Shewanella pealeana (strain ATCC 700345 / ANG-SQ1) protein is Molybdenum cofactor guanylyltransferase.